Here is a 658-residue protein sequence, read N- to C-terminus: Structure-specific endonuclease subunit SLX4 (658 aa).

3 disordered regions span residues 17–37, 74–123, and 327–383; these read VDSDSPMQEQDELPMTQIPGD, GATE…KSIT, and QPGV…QVLQ. Low complexity-rich tracts occupy residues 75-90 and 99-108; these read ATESAPPSRAATPPAK and KAAGRTSTGT. A compositionally biased stretch (polar residues) spans 365–374; sequence FPKSPTSTPE.

It belongs to the SLX4 family. In terms of assembly, forms a heterodimer with SLX1. Phosphorylated in response to DNA damage.

It localises to the nucleus. Functionally, regulatory subunit of the SLX1-SLX4 structure-specific endonuclease that resolves DNA secondary structures generated during DNA repair and recombination. Has endonuclease activity towards branched DNA substrates, introducing single-strand cuts in duplex DNA close to junctions with ss-DNA. The polypeptide is Structure-specific endonuclease subunit SLX4 (Lachancea thermotolerans (strain ATCC 56472 / CBS 6340 / NRRL Y-8284) (Yeast)).